Reading from the N-terminus, the 512-residue chain is Lysine--tRNA ligase (512 aa).

Mg(2+) contacts are provided by glutamate 408 and glutamate 415.

This sequence belongs to the class-II aminoacyl-tRNA synthetase family. As to quaternary structure, homodimer. The cofactor is Mg(2+).

It localises to the cytoplasm. The enzyme catalyses tRNA(Lys) + L-lysine + ATP = L-lysyl-tRNA(Lys) + AMP + diphosphate. The chain is Lysine--tRNA ligase from Prochlorococcus marinus (strain MIT 9515).